We begin with the raw amino-acid sequence, 805 residues long: Sucrose synthase (805 aa).

Residues 275–752 are GT-B glycosyltransferase; sequence MVFNVVILSP…GLQRIEEKYT (478 aa).

It belongs to the glycosyltransferase 1 family. Plant sucrose synthase subfamily.

The enzyme catalyses an NDP-alpha-D-glucose + D-fructose = a ribonucleoside 5'-diphosphate + sucrose + H(+). Its function is as follows. Sucrose-cleaving enzyme that provides UDP-glucose and fructose for various metabolic pathways. The polypeptide is Sucrose synthase (SS1) (Vigna radiata var. radiata (Mung bean)).